We begin with the raw amino-acid sequence, 159 residues long: Small ribosomal subunit protein uS17 (159 aa).

This sequence belongs to the universal ribosomal protein uS17 family.

The polypeptide is Small ribosomal subunit protein uS17 (RPS11) (Euphorbia esula (Leafy spurge)).